The sequence spans 264 residues: Mitochondrial distribution and morphology protein 12 (264 aa).

Positions 1-232 (MSFDINWNKI…WPSWINLDFN (232 aa)) constitute an SMP-LTD domain. Residues 240 to 264 (ESSSSAEESLPHRDDAQDFSADARA) form a disordered region. Basic and acidic residues predominate over residues 248 to 264 (SLPHRDDAQDFSADARA).

This sequence belongs to the MDM12 family. As to quaternary structure, component of the ER-mitochondria encounter structure (ERMES) or MDM complex, composed of MMM1, MDM10, MDM12 and MDM34. An MMM1 homodimer associates with one molecule of MDM12 on each side in a pairwise head-to-tail manner, and the SMP-LTD domains of MMM1 and MDM12 generate a continuous hydrophobic tunnel for phospholipid trafficking.

The protein resides in the mitochondrion outer membrane. Its subcellular location is the endoplasmic reticulum membrane. Functionally, component of the ERMES/MDM complex, which serves as a molecular tether to connect the endoplasmic reticulum (ER) and mitochondria. Components of this complex are involved in the control of mitochondrial shape and protein biogenesis, and function in nonvesicular lipid trafficking between the ER and mitochondria. MDM12 is required for the interaction of the ER-resident membrane protein MMM1 and the outer mitochondrial membrane-resident beta-barrel protein MDM10. The MDM12-MMM1 subcomplex functions in the major beta-barrel assembly pathway that is responsible for biogenesis of all mitochondrial outer membrane beta-barrel proteins, and acts in a late step after the SAM complex. The MDM10-MDM12-MMM1 subcomplex further acts in the TOM40-specific pathway after the action of the MDM12-MMM1 complex. Essential for establishing and maintaining the structure of mitochondria and maintenance of mtDNA nucleoids. The sequence is that of Mitochondrial distribution and morphology protein 12 from Eremothecium gossypii (strain ATCC 10895 / CBS 109.51 / FGSC 9923 / NRRL Y-1056) (Yeast).